A 720-amino-acid polypeptide reads, in one-letter code: MSASDLTSVQATAPQGRRQILVTSALPYANGQIHIGHLVEYIQTDIWVRTLRMHGHEVYYIGADDTHGTPVMLRAEKEGLTPKQLIDRVWTEHKRDFDSFGVSFDNFYSTDSDENRVLSESIYLALKENGLIAERAIEQAYDPVKEMFLPDRFIKGECPKCHAKDQYGDNCEVCGSTYLPTELLNPYSVVSGATPVRKTSTHYFFRLSDPRCESFLREWVSGLAQPEATNKMREWLGDAGEAKLADWDISRDAPYFGFEIPGAPGKYFYVWLDAPVGYYASFKNLCDREGIDFDAWIRAGSTAEQYHFIGKDILYFHTLFWPAMLEFSGHRTPTNVFAHGFLTVDGAKMSKSRGTFITAQSYIDTGLNPEWLRYYFAAKLNATMEDIDLNLDDFQARVNSDLVGKYVNIASRAAGFLIKRFDGRVQDSAMNHPLVAKLRDAIASIAAHYEGREYSRALRHTMELADEVNAYVDGAKPWELAKDPANAVALHETCSVSLEAFRLLSLALKPVMPRVAEAVEAFFGVAPLAWADAAKPLSSAQPIKAYQHLMTRVDPKQIDALLAANRDSLQADAAGAAAAGATAANAAKDAKNAKANAKAVAANGADDAPISIDDFAKVDLRIAKIVACQAVEGSDKLLQLTLDIGEEKTRNVFSGIKSAYQPEQLVGKLTVMVANLAPRKMKFGLSEGMVLAASAADEKAEPGLYILEPHSGAKPGMRVK.

A 'HIGH' region motif is present at residues 27–37 (PYANGQIHIGH). Residues cysteine 158, cysteine 161, cysteine 171, and cysteine 174 each coordinate Zn(2+). The short motif at 348-352 (KMSKS) is the 'KMSKS' region element. An ATP-binding site is contributed by lysine 351. The tRNA-binding domain maps to 614–720 (DFAKVDLRIA…SGAKPGMRVK (107 aa)).

The protein belongs to the class-I aminoacyl-tRNA synthetase family. MetG type 1 subfamily. As to quaternary structure, homodimer. Zn(2+) serves as cofactor.

It localises to the cytoplasm. The catalysed reaction is tRNA(Met) + L-methionine + ATP = L-methionyl-tRNA(Met) + AMP + diphosphate. Is required not only for elongation of protein synthesis but also for the initiation of all mRNA translation through initiator tRNA(fMet) aminoacylation. This is Methionine--tRNA ligase from Burkholderia ambifaria (strain ATCC BAA-244 / DSM 16087 / CCUG 44356 / LMG 19182 / AMMD) (Burkholderia cepacia (strain AMMD)).